The following is a 185-amino-acid chain: Ribosome-recycling factor (185 aa).

This sequence belongs to the RRF family.

It is found in the cytoplasm. Responsible for the release of ribosomes from messenger RNA at the termination of protein biosynthesis. May increase the efficiency of translation by recycling ribosomes from one round of translation to another. This is Ribosome-recycling factor from Streptomyces avermitilis (strain ATCC 31267 / DSM 46492 / JCM 5070 / NBRC 14893 / NCIMB 12804 / NRRL 8165 / MA-4680).